The sequence spans 236 residues: Endo-1,4-beta-xylanase 3 (236 aa).

An N-terminal signal peptide occupies residues 1-45 (MQILTWALAALAAIPAVTAAPVETVEASSMDELVERSPNVTLVAR). N-linked (GlcNAc...) asparagine glycosylation is found at asparagine 39 and asparagine 106. A GH11 domain is found at 46-236 (GTPSSTGTHN…SSGSASMTVR (191 aa)). Glutamate 131 acts as the Nucleophile in catalysis. Glutamate 223 functions as the Proton donor in the catalytic mechanism.

The protein belongs to the glycosyl hydrolase 11 (cellulase G) family.

The protein localises to the secreted. It catalyses the reaction Endohydrolysis of (1-&gt;4)-beta-D-xylosidic linkages in xylans.. The protein operates within glycan degradation; xylan degradation. Its function is as follows. Endo-1,4-beta-xylanase involved in the hydrolysis of xylan, a major structural heterogeneous polysaccharide found in plant biomass representing the second most abundant polysaccharide in the biosphere, after cellulose. The polypeptide is Endo-1,4-beta-xylanase 3 (XYL3) (Pyricularia grisea (Crabgrass-specific blast fungus)).